Here is a 711-residue protein sequence, read N- to C-terminus: Polyribonucleotide nucleotidyltransferase (711 aa).

Residues 77 to 80 are FFRR loop; important for RNA binding; that stretch reads FFRR. The segment at 327 to 331 is interaction with RNase E; sequence LDVRT. Mg(2+) is bound by residues aspartate 486 and aspartate 492. Residues 553 to 612 enclose the KH domain; sequence PRIHTIKINPDKIKDVIGKGGSVIRALTEETGTTIEIEDDGTVKIAATDGEKAKHAIRRI. An S1 motif domain is found at 622 to 690; that stretch reads GRVYTGKVTR…RQGRIRLSIK (69 aa). The tract at residues 689-711 is disordered; the sequence is IKEATEQSQPAAAPEAPAAEQGE. The segment covering 694-711 has biased composition (low complexity); the sequence is EQSQPAAAPEAPAAEQGE.

Belongs to the polyribonucleotide nucleotidyltransferase family. Component of the RNA degradosome, which is a multiprotein complex involved in RNA processing and mRNA degradation. Interacts with RNase E (rne). Homotrimer. The homotrimer forms a ring-like structure with a central channel, where RNA molecules can bind. RNA molecules bind between neighboring subunits. Might interact with YicC. The cofactor is Mg(2+). Mn(2+) serves as cofactor.

The protein resides in the cytoplasm. It catalyses the reaction RNA(n+1) + phosphate = RNA(n) + a ribonucleoside 5'-diphosphate. In terms of biological role, involved in mRNA degradation. Catalyzes the phosphorolysis of single-stranded polyribonucleotides processively in the 3'- to 5'-direction. Also involved, along with RNase II, in tRNA processing. RNases II and R contribute to rRNA degradation during starvation, while RNase R and PNPase are the major contributors to quality control of rRNA during steady state growth. Contributes to degradation of some small RNAs (sRNA). The chain is Polyribonucleotide nucleotidyltransferase from Escherichia coli (strain K12).